Reading from the N-terminus, the 97-residue chain is Large ribosomal subunit protein bL28 (97 aa).

This sequence belongs to the bacterial ribosomal protein bL28 family.

In Rickettsia typhi (strain ATCC VR-144 / Wilmington), this protein is Large ribosomal subunit protein bL28.